Reading from the N-terminus, the 482-residue chain is Bifunctional protein GlmU (482 aa).

The segment at 1-238 is pyrophosphorylase; the sequence is MSAIRPAAVV…HREIAGINNR (238 aa). UDP-N-acetyl-alpha-D-glucosamine contacts are provided by residues 12-15, lysine 26, glutamine 79, and 84-85; these read LAAG and GT. Residue aspartate 110 coordinates Mg(2+). Glycine 147, glutamate 163, asparagine 178, and asparagine 236 together coordinate UDP-N-acetyl-alpha-D-glucosamine. Asparagine 236 contributes to the Mg(2+) binding site. The tract at residues 239 to 259 is linker; that stretch reads VQLAEARRILNDRLLTGAMLA. Residues 260 to 482 form an N-acetyltransferase region; sequence GVTVVDPATT…AVSREADGED (223 aa). 2 residues coordinate UDP-N-acetyl-alpha-D-glucosamine: arginine 341 and lysine 359. Residue histidine 371 is the Proton acceptor of the active site. Positions 374 and 385 each coordinate UDP-N-acetyl-alpha-D-glucosamine. Acetyl-CoA-binding positions include alanine 388, 394-395, serine 413, alanine 431, and arginine 448; that span reads NY. The disordered stretch occupies residues 460-482; that stretch reads RKRPGSAAAKAAEAVSREADGED. A compositionally biased stretch (low complexity) spans 464-473; it reads GSAAAKAAEA.

It in the N-terminal section; belongs to the N-acetylglucosamine-1-phosphate uridyltransferase family. This sequence in the C-terminal section; belongs to the transferase hexapeptide repeat family. Homotrimer. It depends on Mg(2+) as a cofactor.

The protein localises to the cytoplasm. It catalyses the reaction alpha-D-glucosamine 1-phosphate + acetyl-CoA = N-acetyl-alpha-D-glucosamine 1-phosphate + CoA + H(+). The enzyme catalyses N-acetyl-alpha-D-glucosamine 1-phosphate + UTP + H(+) = UDP-N-acetyl-alpha-D-glucosamine + diphosphate. Its pathway is nucleotide-sugar biosynthesis; UDP-N-acetyl-alpha-D-glucosamine biosynthesis; N-acetyl-alpha-D-glucosamine 1-phosphate from alpha-D-glucosamine 6-phosphate (route II): step 2/2. It participates in nucleotide-sugar biosynthesis; UDP-N-acetyl-alpha-D-glucosamine biosynthesis; UDP-N-acetyl-alpha-D-glucosamine from N-acetyl-alpha-D-glucosamine 1-phosphate: step 1/1. It functions in the pathway bacterial outer membrane biogenesis; LPS lipid A biosynthesis. Functionally, catalyzes the last two sequential reactions in the de novo biosynthetic pathway for UDP-N-acetylglucosamine (UDP-GlcNAc). The C-terminal domain catalyzes the transfer of acetyl group from acetyl coenzyme A to glucosamine-1-phosphate (GlcN-1-P) to produce N-acetylglucosamine-1-phosphate (GlcNAc-1-P), which is converted into UDP-GlcNAc by the transfer of uridine 5-monophosphate (from uridine 5-triphosphate), a reaction catalyzed by the N-terminal domain. The chain is Bifunctional protein GlmU from Streptomyces coelicolor (strain ATCC BAA-471 / A3(2) / M145).